A 218-amino-acid chain; its full sequence is GTP cyclohydrolase 1 (218 aa).

3 residues coordinate Zn(2+): C107, H110, and C178.

The protein belongs to the GTP cyclohydrolase I family. Homomer.

It catalyses the reaction GTP + H2O = 7,8-dihydroneopterin 3'-triphosphate + formate + H(+). The protein operates within cofactor biosynthesis; 7,8-dihydroneopterin triphosphate biosynthesis; 7,8-dihydroneopterin triphosphate from GTP: step 1/1. The sequence is that of GTP cyclohydrolase 1 from Azorhizobium caulinodans (strain ATCC 43989 / DSM 5975 / JCM 20966 / LMG 6465 / NBRC 14845 / NCIMB 13405 / ORS 571).